The sequence spans 253 residues: Probable transcriptional regulatory protein Tery_2125 (253 aa).

It belongs to the TACO1 family.

It is found in the cytoplasm. This is Probable transcriptional regulatory protein Tery_2125 from Trichodesmium erythraeum (strain IMS101).